The sequence spans 33 residues: MSDIN-like toxin proprotein 5 (33 aa).

A propeptide spanning residues 1–10 is cleaved from the precursor; sequence MSDINATRLP. Positions 11–18 form a cross-link, cyclopeptide (Ile-Pro); that stretch reads IFWFIYFP. The propeptide occupies 19 to 32; it reads CVGDNVDNTLTRGE.

Belongs to the MSDIN fungal toxin family. Processed by the macrocyclase-peptidase enzyme POPB to yield a toxic cyclic octapeptide. POPB first removes 10 residues from the N-terminus. Conformational trapping of the remaining peptide forces the enzyme to release this intermediate rather than proceed to macrocyclization. The enzyme rebinds the remaining peptide in a different conformation and catalyzes macrocyclization of the N-terminal 8 residues.

In terms of biological role, probable toxin that belongs to the MSDIN-like toxin family responsible for a large number of food poisoning cases and deaths. The chain is MSDIN-like toxin proprotein 5 from Amanita phalloides (Death cap).